The primary structure comprises 573 residues: Sulfite reductase [NADPH] hemoprotein beta-component (573 aa).

[4Fe-4S] cluster contacts are provided by Cys-436, Cys-442, Cys-481, and Cys-485. A siroheme-binding site is contributed by Cys-485.

This sequence belongs to the nitrite and sulfite reductase 4Fe-4S domain family. Alpha(8)-beta(8). The alpha component is a flavoprotein, the beta component is a hemoprotein. It depends on siroheme as a cofactor. [4Fe-4S] cluster is required as a cofactor.

The enzyme catalyses hydrogen sulfide + 3 NADP(+) + 3 H2O = sulfite + 3 NADPH + 4 H(+). Its pathway is sulfur metabolism; hydrogen sulfide biosynthesis; hydrogen sulfide from sulfite (NADPH route): step 1/1. Functionally, component of the sulfite reductase complex that catalyzes the 6-electron reduction of sulfite to sulfide. This is one of several activities required for the biosynthesis of L-cysteine from sulfate. This is Sulfite reductase [NADPH] hemoprotein beta-component from Alteromonas mediterranea (strain DSM 17117 / CIP 110805 / LMG 28347 / Deep ecotype).